The following is a 37-amino-acid chain: Cytochrome b6-f complex subunit 7 (37 aa).

The helical transmembrane segment at 11–29 (AVLLMVLVLVGLAWGFLLL) threads the bilayer.

This sequence belongs to the PetM family. In terms of assembly, the 4 large subunits of the cytochrome b6-f complex are cytochrome b6, subunit IV (17 kDa polypeptide, PetD), cytochrome f and the Rieske protein, while the 4 small subunits are PetG, PetL, PetM and PetN. The complex functions as a dimer.

It localises to the cellular thylakoid membrane. Functionally, component of the cytochrome b6-f complex, which mediates electron transfer between photosystem II (PSII) and photosystem I (PSI), cyclic electron flow around PSI, and state transitions. The chain is Cytochrome b6-f complex subunit 7 from Rippkaea orientalis (strain PCC 8801 / RF-1) (Cyanothece sp. (strain PCC 8801)).